A 272-amino-acid polypeptide reads, in one-letter code: ATP synthase subunit a (272 aa).

5 consecutive transmembrane segments (helical) span residues 41 to 61, 102 to 122, 147 to 167, 212 to 232, and 243 to 263; these read TLNIDSMFFSVVLGLIFLALF, IAPLALTIFVWVFLMNLMDLV, DVNITLSMALGVFILILFYSI, LFGNMYAGELIFILIAGLLPW, and AIFHILIITLQAFIFMVLTIV.

It belongs to the ATPase A chain family. F-type ATPases have 2 components, CF(1) - the catalytic core - and CF(0) - the membrane proton channel. CF(1) has five subunits: alpha(3), beta(3), gamma(1), delta(1), epsilon(1). CF(0) has three main subunits: a(1), b(2) and c(9-12). The alpha and beta chains form an alternating ring which encloses part of the gamma chain. CF(1) is attached to CF(0) by a central stalk formed by the gamma and epsilon chains, while a peripheral stalk is formed by the delta and b chains.

It localises to the cell inner membrane. Its function is as follows. Key component of the proton channel; it plays a direct role in the translocation of protons across the membrane. This is ATP synthase subunit a from Edwardsiella ictaluri (strain 93-146).